Here is a 331-residue protein sequence, read N- to C-terminus: Ornithine carbamoyltransferase (331 aa).

Residues 55-58, glutamine 82, arginine 106, and 133-136 contribute to the carbamoyl phosphate site; these read STRT and HPTQ. L-ornithine-binding positions include asparagine 166, aspartate 230, and 234-235; that span reads SM. Residues 272–273 and arginine 317 contribute to the carbamoyl phosphate site; that span reads CL.

Belongs to the aspartate/ornithine carbamoyltransferase superfamily. OTCase family.

The protein localises to the cytoplasm. The enzyme catalyses carbamoyl phosphate + L-ornithine = L-citrulline + phosphate + H(+). The protein operates within amino-acid biosynthesis; L-arginine biosynthesis; L-arginine from L-ornithine and carbamoyl phosphate: step 1/3. Reversibly catalyzes the transfer of the carbamoyl group from carbamoyl phosphate (CP) to the N(epsilon) atom of ornithine (ORN) to produce L-citrulline. This is Ornithine carbamoyltransferase (argF) from Neisseria gonorrhoeae.